The chain runs to 544 residues: Chaperonin GroEL (544 aa).

Residues 30-33 (TLGP), Lys-51, 87-91 (DGTTT), Gly-415, and Asp-495 each bind ATP.

It belongs to the chaperonin (HSP60) family. As to quaternary structure, forms a cylinder of 14 subunits composed of two heptameric rings stacked back-to-back. Interacts with the co-chaperonin GroES.

It localises to the cytoplasm. It carries out the reaction ATP + H2O + a folded polypeptide = ADP + phosphate + an unfolded polypeptide.. In terms of biological role, together with its co-chaperonin GroES, plays an essential role in assisting protein folding. The GroEL-GroES system forms a nano-cage that allows encapsulation of the non-native substrate proteins and provides a physical environment optimized to promote and accelerate protein folding. In Agrobacterium fabrum (strain C58 / ATCC 33970) (Agrobacterium tumefaciens (strain C58)), this protein is Chaperonin GroEL.